Here is a 246-residue protein sequence, read N- to C-terminus: Triosephosphate isomerase (246 aa).

Position 9-11 (9-11 (NWK)) interacts with substrate. The active-site Electrophile is the histidine 91. Catalysis depends on glutamate 161, which acts as the Proton acceptor. Substrate-binding positions include glycine 167, serine 206, and 227 to 228 (GG).

It belongs to the triosephosphate isomerase family. As to quaternary structure, homodimer.

It localises to the cytoplasm. The catalysed reaction is D-glyceraldehyde 3-phosphate = dihydroxyacetone phosphate. It functions in the pathway carbohydrate biosynthesis; gluconeogenesis. Its pathway is carbohydrate degradation; glycolysis; D-glyceraldehyde 3-phosphate from glycerone phosphate: step 1/1. Involved in the gluconeogenesis. Catalyzes stereospecifically the conversion of dihydroxyacetone phosphate (DHAP) to D-glyceraldehyde-3-phosphate (G3P). The sequence is that of Triosephosphate isomerase from Ruegeria sp. (strain TM1040) (Silicibacter sp.).